The following is a 58-amino-acid chain: U8-ctenitoxin-Pr1a (58 aa).

Cystine bridges form between Cys2–Cys16, Cys9–Cys22, Cys15–Cys40, Cys24–Cys38, and Cys48–Cys55.

As to expression, expressed by the venom gland.

The protein resides in the secreted. Its function is as follows. No toxic effects on mice at dose levels of 5 ug per mouse. May be toxic to insects. The chain is U8-ctenitoxin-Pr1a from Phoneutria reidyi (Brazilian Amazonian armed spider).